A 354-amino-acid chain; its full sequence is uncharacterized protein (354 aa).

An N-terminal signal peptide occupies residues 1 to 21 (MRYLLIVITFFMGFSSLPAWA).

This sequence to E.coli YbgO.

Its function is as follows. May be involved in a fimbrial system chaperoned by YqiH and exported by YqiG. This is an uncharacterized protein from Escherichia coli (strain K12).